Reading from the N-terminus, the 226-residue chain is DnaJ homolog subfamily C member 30, mitochondrial (226 aa).

Residues 1–38 constitute a mitochondrion transit peptide; that stretch reads MAAMRWRWWQRLLPWRLLQARGFPQNSAPSLGLGARTY. Residues 49-114 enclose the J domain; the sequence is ALYDLLGVPS…TLRRKYDRGL (66 aa). Residues 116–157 are disordered; it reads SDEDLRGPGVRPSRTPAPDPGSPRTPPPTSRTHDGSRASPGA. Pro residues predominate over residues 130 to 144; that stretch reads TPAPDPGSPRTPPPT. The chain crosses the membrane as a helical span at residues 208–225; that stretch reads DTAAIFLIFSIFIIIGFY.

In terms of assembly, associates with the ATP synthase complex. Interacts with MT-ATP6; interaction is direct. Interacts with ATP5MC2; interaction is direct. Expressed in brain, heart, kidney, liver, lung, spleen, stomach and testis. Highly expressed in the brain. In the neocortex, expressed in most, if not all, glutamatergic excitatory projection neurons (pyramidal) and many interneurons, with the strongest signal noticeably in large pyramidal neurons of layer 3C. Also present in pyramidal neurons of layer 3C PNs of the superior temporal cortex, as well as in pyramidal neurons (Betz cells) of the layer 5B primary motor cortex (at protein level).

The protein resides in the mitochondrion inner membrane. Mitochondrial protein enriched in neurons that acts as a regulator of mitochondrial respiration. Associates with the ATP synthase complex and facilitates ATP synthesis. May be a chaperone protein involved in the turnover of the subunits of mitochondrial complex I N-module. It facilitates the degradation of N-module subunits damaged by oxidative stress, and contributes to complex I functional efficiency. In Homo sapiens (Human), this protein is DnaJ homolog subfamily C member 30, mitochondrial.